The chain runs to 125 residues: Ribonuclease pancreatic (125 aa).

2 residues coordinate substrate: K7 and R10. H12 (proton acceptor) is an active-site residue. Cystine bridges form between C27/C85, C41/C96, C59/C111, and C66/C73. N-linked (GlcNAc...) asparagine glycosylation is present at N35. Residues 42 to 46 (KPVNT), K67, and R86 each bind substrate. The Proton donor role is filled by H120.

Belongs to the pancreatic ribonuclease family. As to quaternary structure, monomer. Interacts with and forms tight 1:1 complexes with RNH1. Dimerization of two such complexes may occur. Interaction with RNH1 inhibits this protein. In terms of tissue distribution, pancreas.

Its subcellular location is the secreted. It carries out the reaction an [RNA] containing cytidine + H2O = an [RNA]-3'-cytidine-3'-phosphate + a 5'-hydroxy-ribonucleotide-3'-[RNA].. The catalysed reaction is an [RNA] containing uridine + H2O = an [RNA]-3'-uridine-3'-phosphate + a 5'-hydroxy-ribonucleotide-3'-[RNA].. In terms of biological role, endonuclease that catalyzes the cleavage of RNA on the 3' side of pyrimidine nucleotides. Acts on single-stranded and double-stranded RNA. In Spalax ehrenbergi (Middle East blind mole rat), this protein is Ribonuclease pancreatic (RNASE1).